Consider the following 110-residue polypeptide: UPF0122 protein BPUM_1495 (110 aa).

This sequence belongs to the UPF0122 family.

Functionally, might take part in the signal recognition particle (SRP) pathway. This is inferred from the conservation of its genetic proximity to ftsY/ffh. May be a regulatory protein. In Bacillus pumilus (strain SAFR-032), this protein is UPF0122 protein BPUM_1495.